Consider the following 163-residue polypeptide: Phosphopantetheine adenylyltransferase (163 aa).

Ser-9 contacts substrate. ATP is bound by residues 9–10 (SF) and His-17. Residues Lys-41, Val-78, and Arg-92 each contribute to the substrate site. ATP is bound by residues 93 to 95 (GLR), Glu-103, and 128 to 134 (SRPITAT).

Belongs to the bacterial CoaD family. As to quaternary structure, homohexamer. The cofactor is Mg(2+).

The protein localises to the cytoplasm. The catalysed reaction is (R)-4'-phosphopantetheine + ATP + H(+) = 3'-dephospho-CoA + diphosphate. It functions in the pathway cofactor biosynthesis; coenzyme A biosynthesis; CoA from (R)-pantothenate: step 4/5. In terms of biological role, reversibly transfers an adenylyl group from ATP to 4'-phosphopantetheine, yielding dephospho-CoA (dPCoA) and pyrophosphate. In Rhizobium meliloti (strain 1021) (Ensifer meliloti), this protein is Phosphopantetheine adenylyltransferase.